The chain runs to 595 residues: uncharacterized protein (595 aa).

3 disordered regions span residues 50-159 (VNPS…KTKK), 398-430 (TYPT…PPSL), and 450-595 (VTEG…SLDK). Low complexity predominate over residues 83-122 (SNKSSALKKSNKSSNKSSNKSSNKSSNKSSNKSSNKSSNK). The segment covering 123 to 132 (FPDKSDKSDS) has biased composition (basic and acidic residues). The segment covering 137–146 (DNSDDSDDSS) has biased composition (acidic residues). Positions 398 to 409 (TYPTTPLFSEPT) are enriched in low complexity. Pro residues predominate over residues 410–420 (IPKPPQQPTTE). The segment covering 421–430 (PPSGFKPPSL) has biased composition (low complexity). The span at 454 to 463 (KVVESDDHTS) shows a compositional bias: basic and acidic residues. Residues 467–476 (IPPPPPPPPS) are compositionally biased toward pro residues. A compositionally biased stretch (low complexity) spans 477-529 (ISSDNSSPNKSVKSSTKSSTKSSTKSSTKSSTKSSTKSPSKTPVKSPIKSSSK). Positions 530 to 542 (LSDKKSPTKKIES) are enriched in basic and acidic residues. A compositionally biased stretch (acidic residues) spans 544 to 553 (GESDSESDSE). Positions 559–570 (TKKSTNKIKKIT) are enriched in basic residues. Low complexity predominate over residues 571-580 (NNKLENSNTK). Positions 581–595 (NNKKFSKKKTISLDK) are enriched in basic residues.

This is an uncharacterized protein from Acanthamoeba polyphaga mimivirus (APMV).